Reading from the N-terminus, the 154-residue chain is MSVTLDLQLACADTDGLPGEAQLQGWLDGTILGFQEEAEVTVRIVDEAESRELNLTYRGKDKPTNVLSFPFEAPPGMELPLLGDLVICRQVVEQEATEQNKPLEAHWAHMVVHGSLHLLGYDHIEDDEAEEMEQLERDIMQELGFADPYLNDEE.

Zn(2+) is bound by residues histidine 113, histidine 117, and histidine 123.

Belongs to the endoribonuclease YbeY family. Requires Zn(2+) as cofactor.

The protein localises to the cytoplasm. In terms of biological role, single strand-specific metallo-endoribonuclease involved in late-stage 70S ribosome quality control and in maturation of the 3' terminus of the 16S rRNA. The protein is Endoribonuclease YbeY of Aeromonas salmonicida (strain A449).